The primary structure comprises 126 residues: Glycine cleavage system H protein (126 aa).

Positions 22–104 (KAYIGITSFA…YEQAWMIVVE (83 aa)) constitute a Lipoyl-binding domain. N6-lipoyllysine is present on Lys63.

Belongs to the GcvH family. The glycine cleavage system is composed of four proteins: P, T, L and H. (R)-lipoate serves as cofactor.

The glycine cleavage system catalyzes the degradation of glycine. The H protein shuttles the methylamine group of glycine from the P protein to the T protein. Its function is as follows. Is also involved in protein lipoylation via its role as an octanoyl/lipoyl carrier protein intermediate. The chain is Glycine cleavage system H protein from Brevibacillus brevis (strain 47 / JCM 6285 / NBRC 100599).